A 524-amino-acid polypeptide reads, in one-letter code: Solute carrier family 40 member 1 (524 aa).

Basic and acidic residues predominate over residues 1–18 (MENETELRVVHQEEQQRE). The disordered stretch occupies residues 1–30 (MENETELRVVHQEEQQREEGEDESQPQNPP). Transmembrane regions (helical) follow at residues 70–92 (SLLL…GPIV), 109–129 (LLFQ…LLLV), 137–157 (LPVF…GVLS), 191–211 (GIDL…ISFV), 218–238 (ITFA…FISV), 314–334 (VVLP…FGTL), 347–367 (YIIG…TLVY), 380–400 (GLWS…SIWV), 409–429 (MLMA…LAVI), 446–466 (GVQN…GIIV), and 472–492 (FWIL…LYTI).

Belongs to the ferroportin (FP) (TC 2.A.100) family. SLC40A subfamily.

It localises to the membrane. Its function is as follows. May be involved in iron transport and iron homeostasis. This is Solute carrier family 40 member 1 (IREG1) from Arabidopsis thaliana (Mouse-ear cress).